Reading from the N-terminus, the 365-residue chain is Aspartate-semialdehyde dehydrogenase (365 aa).

Positions 15, 16, 17, 18, 40, 43, 89, and 90 each coordinate NADP(+). C156 acts as the Acyl-thioester intermediate in catalysis. G188 lines the NADP(+) pocket. The active-site Proton acceptor is the H255. N342 serves as a coordination point for NADP(+).

Belongs to the aspartate-semialdehyde dehydrogenase family. As to quaternary structure, homotetramer; dimer of dimers.

Its subcellular location is the cytoplasm. It localises to the cytosol. It is found in the nucleus. It carries out the reaction L-aspartate 4-semialdehyde + phosphate + NADP(+) = 4-phospho-L-aspartate + NADPH + H(+). Its pathway is amino-acid biosynthesis; L-methionine biosynthesis via de novo pathway; L-homoserine from L-aspartate: step 2/3. It participates in amino-acid biosynthesis; L-threonine biosynthesis; L-threonine from L-aspartate: step 2/5. Inhibited by the competitive inhibitor 1,4-benzoquinone and derivates such as 2-chloro-3-methoxy-1,4-naphthoquinone, 2,3-dichloro-1,4-naphthoquinone, 2-chloro-1,4-naphthoquinone, 2-bromo-1,4-naphthoquinone and 2,3-dichloro-5,8-dihydroxy-1,4-naphthoquinone. Its function is as follows. Catalyzes the NADPH-dependent formation of L-aspartate 4-semialdehyde (L-ASA) by the reductive dephosphorylation of 4-phospho-L-aspartate. Mediates the second step in the biosynthesis of amino acids that derive from aspartate (the aspartate family of amino acids), including methioinine and threonine, the latter of which is a precursor to isoleucine. The polypeptide is Aspartate-semialdehyde dehydrogenase (Cryptococcus neoformans var. neoformans serotype D (strain JEC21 / ATCC MYA-565) (Filobasidiella neoformans)).